Here is a 161-residue protein sequence, read N- to C-terminus: Glycine cleavage system H protein 2 (161 aa).

One can recognise a Lipoyl-binding domain in the interval 34–116; that stretch reads TVTVGVTDIG…YGEGWIAKLK (83 aa). Lys75 bears the N6-lipoyllysine mark.

This sequence belongs to the GcvH family. In terms of assembly, the glycine cleavage system is composed of four proteins: P, T, L and H. It depends on (R)-lipoate as a cofactor.

In terms of biological role, the glycine cleavage system catalyzes the degradation of glycine. The H protein shuttles the methylamine group of glycine from the P protein to the T protein. In Aquifex aeolicus (strain VF5), this protein is Glycine cleavage system H protein 2.